We begin with the raw amino-acid sequence, 334 residues long: MNKSIVFSGAQPTGKLTIGNYIGSIRHWVEMQKHYQCIYCIVDLHSITVRNNLCSLHTRSLDTLALYLACGINPDISTIFIQSHVPEHSQLNWILNCYTYYGELNRMVQFKEKSSRYKNNINVGLFNYPILMASDILLYQTDFVPVGEDQRQHVELVRDIARRFNNIFGTVFKIPNVLISMYGSRIMSLLNPTRKMSKSDPDPNSYITLLDNVDCISKKIQGAVTDSDSPAAICFDPIKKPGISNLLAILSGISGQSILNLEESFQSKTYAQLKDVVIQELSCMLKDLQCRYISERSNEGKLNHILNVGSQKARMQAQITFKKVNELMGFYKES.

ATP is bound by residues 11–13 (QPT) and 19–20 (GN). The short motif at 12-20 (PTGKLTIGN) is the 'HIGH' region element. Position 135 (D135) interacts with L-tryptophan. ATP contacts are provided by residues 147–149 (GED), I186, and 195–199 (KMSKS). The short motif at 195–199 (KMSKS) is the 'KMSKS' region element.

This sequence belongs to the class-I aminoacyl-tRNA synthetase family. As to quaternary structure, homodimer.

Its subcellular location is the cytoplasm. It catalyses the reaction tRNA(Trp) + L-tryptophan + ATP = L-tryptophyl-tRNA(Trp) + AMP + diphosphate + H(+). In terms of biological role, catalyzes the attachment of tryptophan to tRNA(Trp). This Blochmanniella floridana protein is Tryptophan--tRNA ligase.